A 215-amino-acid polypeptide reads, in one-letter code: NAD(P)H-hydrate epimerase (215 aa).

The 205-residue stretch at 8 to 212 (MYNIENKGHD…KIGIPPEAEE (205 aa)) folds into the YjeF N-terminal domain. 57-61 (NNGGD) provides a ligand contact to (6S)-NADPHX. 2 residues coordinate K(+): N58 and D124. (6S)-NADPHX contacts are provided by residues 128–134 (GTGISGE), Y139, and D157. Residue S160 participates in K(+) binding.

This sequence belongs to the NnrE/AIBP family. It depends on K(+) as a cofactor.

The enzyme catalyses (6R)-NADHX = (6S)-NADHX. It catalyses the reaction (6R)-NADPHX = (6S)-NADPHX. Catalyzes the epimerization of the S- and R-forms of NAD(P)HX, a damaged form of NAD(P)H that is a result of enzymatic or heat-dependent hydration. This is a prerequisite for the S-specific NAD(P)H-hydrate dehydratase to allow the repair of both epimers of NAD(P)HX. The protein is NAD(P)H-hydrate epimerase of Nitrosopumilus maritimus (strain SCM1).